Reading from the N-terminus, the 1084-residue chain is Transcription elongation factor SPT5 (1084 aa).

The disordered stretch occupies residues 1–91 (MSDSEDSDFS…DDEYEDEDPW (91 aa)). Composition is skewed to acidic residues over residues 20–32 (AEEV…EEEQ), 41–62 (AEEE…EEDD), and 77–91 (DEAD…EDPW). The segment at 175–269 (DPNLWTVKCK…TDVLKVVKEV (95 aa)) is interaction with SUPT4H1. KOW domains lie at 272–305 (LKPK…ISLK), 419–450 (LQAG…ITIM), 471–502 (FRMG…VILF), and 593–626 (IHVK…LHCK). The interval 312–419 (LDRIKARMSM…TTGKEREHNL (108 aa)) is interaction with RNA polymerase II. At Ser665 the chain carries Phosphoserine. The tract at residues 667 to 700 (RISSPMHPGGGGQPQRGGGGGGGGGMGRGRGRRD) is disordered. Residues 674–694 (PGGGGQPQRGGGGGGGGGMGR) show a composition bias toward gly residues. Residues 702-735 (DLIGQTVRISQGPYKGYIGVVKDATESTARVELH) form the KOW 5 domain. The tract at residues 748–973 (LTTVGGKERQ…HTPGSNIDQA (226 aa)) is disordered. Residues 758–763 (GRSSTH) form a CTR1-1; approximate repeat. The 8 X 7 AA approximate tandem repeats of G-S-[QR]-T-P-X-[YQ], motif CTR1 stretch occupies residues 758 to 815 (GRSSTHLRTPMYGSQTPIYGTGSRTPMYGSQTPLHDGSRTPHYGSQTPLHDGSRTPGQ). Residues 759–790 (RSSTHLRTPMYGSQTPIYGTGSRTPMYGSQTP) are compositionally biased toward polar residues. The stretch at 764 to 769 (LRTPMY) is one CTR1-2; approximate repeat. A CTR1-3 repeat occupies 770–776 (GSQTPIY). A phosphothreonine; by CDK9 mark is found at Thr773 and Thr782. Residues 779 to 785 (GSRTPMY) form a CTR1-4 repeat. One copy of the CTR1-5 repeat lies at 786–792 (GSQTPLH). A CTR1-6 repeat occupies 794-800 (GSRTPHY). The CTR1-7 repeat unit spans residues 801–807 (GSQTPLH). One copy of the CTR1-8 repeat lies at 809–815 (GSRTPGQ). A compositionally biased stretch (acidic residues) spans 832-842 (DEYEFAYDDEP). The CTR2-1 repeat unit spans residues 842-849 (PSPSPQGY). The segment at 842-948 (PSPSPQGYGG…ASPSPSPVGY (107 aa)) is 10 X 8 AA approximate tandem repeats of P-[TS]-P-S-P-[QA]-[SG]-Y, motif CTR2. A CTR2-2; approximate repeat occupies 852 to 860 (TPNPQTPGY). Residues 855–864 (PQTPGYPEVP) are compositionally biased toward pro residues. The stretch at 861–867 (PEVPSPQ) is one CTR2-3; approximate repeat. A compositionally biased stretch (polar residues) spans 866-888 (PQVNPQYNPQTPGTPAMYNTDQY). The CTR2-4; half-length repeat unit spans residues 879–883 (TPAMY). The stretch at 894-900 (PSPQGSY) is one CTR2-5; approximate repeat. Residues 894–909 (PSPQGSYQPSPSPQSY) are compositionally biased toward low complexity. The stretch at 902–909 (PSPSPQSY) is one CTR2-6 repeat. The stretch at 914–919 (PSPVGY) is one CTR2-7; approximate repeat. One copy of the CTR2-8 repeat lies at 922-928 (THSPASY). The stretch at 930–937 (PTPSPMAY) is one CTR2-9 repeat. The CTR2-10 repeat unit spans residues 941–948 (PSPSPVGY).

The protein belongs to the SPT5 family. As to quaternary structure, interacts with SUPT4H1 to form the DSIF complex. DSIF interacts with RNA polymerase II and with the positive transcription elongation factor b complex (P-TEFb complex), which is composed of CDK9 and cyclin-T. Post-translationally, phosphorylated. Phosphorylation by P-TEFb (CDK9) at Thr residues of the C-terminal repeats alleviates transcriptional pausing and promotes transcription elongation.

It localises to the nucleus. In terms of biological role, component of the DRB sensitivity-inducing factor complex (DSIF complex), which regulates mRNA processing and transcription elongation by RNA polymerase II. DSIF positively regulates mRNA capping by stimulating the mRNA guanylyltransferase activity of RNGTT/CAP1A. DSIF also acts cooperatively with the negative elongation factor complex (NELF complex) to enhance transcriptional pausing at sites proximal to the promoter. Transcriptional pausing may facilitate the assembly of an elongation competent RNA polymerase II complex. DSIF and NELF promote pausing by inhibition of the transcription elongation factor TFIIS/S-II. TFIIS/S-II binds to RNA polymerase II at transcription pause sites and stimulates the weak intrinsic nuclease activity of the enzyme. Cleavage of blocked transcripts by RNA polymerase II promotes the resumption of transcription from the new 3' terminus and may allow repeated attempts at transcription through natural pause sites. Following phosphorylation by CDK9, DSIF can also positively regulate transcriptional elongation. Regulation of transcriptional elongation by this protein is required for the expression of genes which control neuronal development. The protein is Transcription elongation factor SPT5 (supt5h) of Danio rerio (Zebrafish).